The following is a 416-amino-acid chain: 3-isopropylmalate dehydratase large subunit 2 (416 aa).

The [4Fe-4S] cluster site is built by C296, C356, and C359.

Belongs to the aconitase/IPM isomerase family. LeuC type 2 subfamily. Heterodimer of LeuC and LeuD. The cofactor is [4Fe-4S] cluster.

It catalyses the reaction (2R,3S)-3-isopropylmalate = (2S)-2-isopropylmalate. Its pathway is amino-acid biosynthesis; L-leucine biosynthesis; L-leucine from 3-methyl-2-oxobutanoate: step 2/4. Catalyzes the isomerization between 2-isopropylmalate and 3-isopropylmalate, via the formation of 2-isopropylmaleate. In Archaeoglobus fulgidus (strain ATCC 49558 / DSM 4304 / JCM 9628 / NBRC 100126 / VC-16), this protein is 3-isopropylmalate dehydratase large subunit 2.